A 142-amino-acid chain; its full sequence is Large-conductance mechanosensitive channel (142 aa).

The next 3 helical transmembrane spans lie at 14-34 (VMDL…VTSV), 38-58 (LVMP…NYFL), and 82-102 (GSFI…FLLV).

Belongs to the MscL family. Homopentamer.

The protein localises to the cell inner membrane. Functionally, channel that opens in response to stretch forces in the membrane lipid bilayer. May participate in the regulation of osmotic pressure changes within the cell. In Sinorhizobium fredii (strain NBRC 101917 / NGR234), this protein is Large-conductance mechanosensitive channel.